The chain runs to 225 residues: Small ribosomal subunit protein uS2 (225 aa).

Belongs to the universal ribosomal protein uS2 family.

The polypeptide is Small ribosomal subunit protein uS2 (Metallosphaera sedula (strain ATCC 51363 / DSM 5348 / JCM 9185 / NBRC 15509 / TH2)).